The chain runs to 341 residues: MAKITAQLVKELRERTGAGVMDAKKALVEVDGDMDKAVQYLRDKGMAKAAKKADRVAAEGLTGVYVDGNVAAITEVNSETDFVSSNDKFVNLVNAATKTIAEGKPANMEAAEELKMADGTTLAQSFVDATATIGEKIVLRRFALEEKTDDQEFGAYQHNGGQIGVITVLEGADAATAKHLAMHIAAMSPKVISPEELDDDFITDQLAVMNHKIDQDNESRALVNKKPLPYLVYGSEKQLSDEILAKAKEDIKAELKEEGKPEKIWDKIIPGKMQRFIDDNTQVDKQFAVLSQNYIMDDSKTVGEFLKEKGAKLVAFQRYEVGEGIEKKQEDFAAEVREQMK.

The segment at 80–83 (TDFV) is involved in Mg(2+) ion dislocation from EF-Tu.

It belongs to the EF-Ts family.

It localises to the cytoplasm. Associates with the EF-Tu.GDP complex and induces the exchange of GDP to GTP. It remains bound to the aminoacyl-tRNA.EF-Tu.GTP complex up to the GTP hydrolysis stage on the ribosome. This chain is Elongation factor Ts, found in Lactobacillus gasseri (strain ATCC 33323 / DSM 20243 / BCRC 14619 / CIP 102991 / JCM 1131 / KCTC 3163 / NCIMB 11718 / NCTC 13722 / AM63).